The primary structure comprises 360 residues: Mannonate dehydratase (360 aa).

Belongs to the mannonate dehydratase family. Fe(2+) serves as cofactor. Requires Mn(2+) as cofactor.

It catalyses the reaction D-mannonate = 2-dehydro-3-deoxy-D-gluconate + H2O. Its pathway is carbohydrate metabolism; pentose and glucuronate interconversion. In terms of biological role, catalyzes the dehydration of D-mannonate. This chain is Mannonate dehydratase, found in Thermotoga sp. (strain RQ2).